A 1321-amino-acid polypeptide reads, in one-letter code: C-Jun-amino-terminal kinase-interacting protein 4 (1321 aa).

Position 1 is an N-acetylmethionine (M1). One can recognise an RH1 domain in the interval 7 to 95 (VVYQEEPGGS…ITQYEREKAL (89 aa)). Residues 66–166 (AQDQEHQVEL…NALHQRHTEM (101 aa)) are a coiled coil. Residues S109, S183, S185, S194, and S203 each carry the phosphoserine modification. The interval 203–292 (SLGIFPLPAG…SDVATIPTDT (90 aa)) is disordered. T217 carries the phosphothreonine modification. The segment covering 236–253 (ELSQPRSHTSLKVSNSPE) has biased composition (polar residues). 5 positions are modified to phosphoserine: S238, S251, S265, S268, and S272. A compositionally biased stretch (polar residues) spans 266-285 (DVSQGGSKATTPASTANSDV). The residue at position 292 (T292) is a Phosphothreonine. A phosphoserine mark is found at S311, S329, S332, and S347. Phosphothreonine occurs at positions 348, 365, and 418. Residues 408 to 534 (REVENLILEN…LQEAVRWTEM (127 aa)) are a coiled coil. Positions 473-489 (LRKARAEAEDARQKAKD) are enriched in basic and acidic residues. Disordered stretches follow at residues 473–500 (LRKA…TAQR) and 563–600 (SSNT…SQLP). Residues 500–571 (RKRFTRVEMA…SSSNTTKKPE (72 aa)) form the RH2 domain. A Phosphothreonine modification is found at T586. Phosphoserine is present on S588. At T595 the chain carries Phosphothreonine. A phosphoserine mark is found at S705, S728, S730, S732, and S733. Residues 724 to 758 (SKQRSASQSSLDKLDQELKEQQKELKNQEELSSLV) adopt a coiled-coil conformation. The tract at residues 854–906 (GAATSPSTNGASPVMDKPPEMEAENSEVDENVPTAEEATEATEGNAGSAEDTV) is disordered. Residues 855–864 (AATSPSTNGA) are compositionally biased toward polar residues. The span at 874-883 (MEAENSEVDE) shows a compositional bias: acidic residues. The segment covering 894–903 (ATEGNAGSAE) has biased composition (low complexity). S1188 is subject to Phosphoserine. Residues 1239 to 1266 (PQSSSSGTDLTGDKAGPSAQEPGSQTPL) are disordered. Phosphothreonine is present on T1264.

It belongs to the JIP scaffold family. Homodimer. The homodimer interacts with ARF6, forming a heterotetramer. Homooligomer. Interacts with MAX, MAPK14, MAP3K3, MYC, KNS2 and MAP2K4. Interaction with KNS2 is important in the formation of ternary complex with MAPK8. Interacts with NFKB1. Interacts with PIP4P1. Interacts with PIKFYVE. As to quaternary structure, interacts with MAPK8, MAPK9, MAPK10. In terms of processing, phosphorylated by MAPK8 and MAPK14. As to expression, expressed only in testis on the round spermatids of stage I, II and II. Absent in spermatogonia and spermatocyte. In terms of tissue distribution, expressed in testis and in acute myeloid leukemia (AML) patients. Expressed in testis.

It is found in the cytoplasm. Its subcellular location is the perinuclear region. The protein localises to the lysosome membrane. It localises to the cytoplasmic vesicle. The protein resides in the secretory vesicle. It is found in the acrosome. With respect to regulation, may play a role in spermatozoa-egg-interaction. Its function is as follows. The JNK-interacting protein (JIP) group of scaffold proteins selectively mediates JNK signaling by aggregating specific components of the MAPK cascade to form a functional JNK signaling module. Regulates lysosomal positioning by acting as an adapter protein which links PIP4P1-positive lysosomes to the dynein-dynactin complex. Assists PIKFYVE selective functionality in microtubule-based endosome-to-TGN trafficking. The protein is C-Jun-amino-terminal kinase-interacting protein 4 of Homo sapiens (Human).